The chain runs to 508 residues: MGRRNENCANSLRVSNISQENLSHWNLDSEVPVSENKNLPAGRDGAAGGKINKNYLEIPVEQLMLEPNLSVHSQKSTQNSKQGIFQLWNCPLNEGSTIEKREFKKSSVETGFNVINHPIRVFTLNHPLTIASVDKQVGPYPGLPMPLGLCWPYADGDFFKNRNEIHVSSCSTIENNDGETLPAPNWNLKHGNSSVEENFTDESDLSENEKTNDTLLSYFKKVDLNLKPETIKNVEEPFTEEPNEVFPYPDFLPPPFSALDLHNLALSKSDNWKVTVDPAETSVEHLITRLLELERLQHMTIQKERPRLQTTFCTPAVTERPSSSKATPKVRQPKLCDSLSLQIPCVDKSQEKSKNNSGSCKLEQNALKRNWSNAGKYRWNSRPLSLKSSSTPKQLIETYDKNPKSSILSPCQELSFKPTIGHTNQSMVKMVSTRCLPWRSPMPVSPIPLTFPENQKEEIKAPKRNFGTKKKLYRQNIVLNRPFSIQKLNCLSPSLIAKDKCCSPIEQK.

This sequence belongs to the FAM217 family.

The protein is Protein FAM217A (FAM217A) of Homo sapiens (Human).